The primary structure comprises 707 residues: Metal transporter CNNM3 (707 aa).

A helical membrane pass occupies residues 11–27; that stretch reads LGWLFAALCLGNAAGEA. N-linked (GlcNAc...) asparagine glycosylation is present at Asn-73. The CNNM transmembrane domain occupies 130-308; that stretch reads EAAPPWALGL…DPYSDLSKGV (179 aa). 3 helical membrane-spanning segments follow: residues 193-213, 221-241, and 261-281; these read CALGALLLLASLAQAALAVLL, AVPAVLGSAGLVFLVGEVVPA, and LAVLLTLPVALPVGQLLELAA. CBS domains are found at residues 318–379 and 386–452; these read LTPL…CTPL and YNHP…ILDE. Ser-661 carries the phosphoserine modification. Residues 678–691 are compositionally biased toward polar residues; sequence LGEKTTTAAGSSHS. The disordered stretch occupies residues 678 to 707; sequence LGEKTTTAAGSSHSRPGVPVEGSPGRNPGV. Ser-700 carries the post-translational modification Phosphoserine.

It belongs to the ACDP family. In terms of tissue distribution, widely expressed. Expressed at higher level in heart and spleen.

The protein localises to the cell membrane. In terms of biological role, probable metal transporter. This is Metal transporter CNNM3 (CNNM3) from Homo sapiens (Human).